The primary structure comprises 825 residues: MLLPLYGLASFLVLSQAALVNTSAPQASNDDPFNHSPSFYPTPQGGRINDGKWQAAFYRARELVDQMSIAEKVNLTTGVGSASGPCSGNTGSVPRLNISSICVQDGPLSVRAADLTDVFPCGMAASSSFNKQLIYDRAVAIGSEFKGKGADAILGPVYGPMGVKAAGGRGWEGHGPDPYLEGVIAYLQTIGIQSQGVVSTAKHLIGNEQEHFRFAKKDKHAGKIDPGMFNTSSSLSSEIDDRAMHEIYLWPFAEAVRGGVSSIMCSYNKLNGSHACQNSYLLNYLLKEELGFQGFVMTDWGALYSGIDAANAGLDMDMPCEAQYFGGNLTTAVLNGTLPQDRLDDMATRILSALIYSGVHNPDGPNYNAQTFLTEGHEYFKQQEGDIVVLNKHVDVRSDINRAVALRSAVEGVVLLKNEHETLPLGREKVKRISILGQAAGDDSKGTSCSLRGCGSGAIGTGYGSGAGTFSYFVTPADGIGARAQQEKISYEFIGDSWNQAAAMDSALYADAAIEVANSVAGEEIGDVDGNYGDLNNLTLWHNAVPLIKNISSINNNTIVIVTSGQQIDLEPFIDNENVTAVIYSSYLGQDFGTVLAKVLFGDENPSGKLPFTIAKDVNDYIPVIEKVDVPDPVDKFTESIYVDYRYFDKYNKPVRYEFGYGLSYSNFSLSDIEIQTLQPFSENAEPAANYSETYQYKQSNMDPSEYTVPEGFKELANYTYPYIHDASSIKANSSYDYPEGYSTEQLDGPKSLAAGGLGGNHTCGMLVTLSLLKSQIKVLMLVGLHLNCMLDIQIMMNSQHLQCNYVDLKRCFWIKIILKLFLLN.

Positions 1-20 are cleaved as a signal peptide; it reads MLLPLYGLASFLVLSQAALV. N21, N74, N97, N230, and N271 each carry an N-linked (GlcNAc...) asparagine glycan. D299 is an active-site residue. Residues N328, N335, N537, N550, N556, N578, N667, N690, N718, N733, and N761 are each glycosylated (N-linked (GlcNAc...) asparagine).

Belongs to the glycosyl hydrolase 3 family. As to quaternary structure, homotetramer.

It catalyses the reaction Hydrolysis of terminal, non-reducing beta-D-glucosyl residues with release of beta-D-glucose.. Its pathway is glycan metabolism; cellulose degradation. In Wickerhamomyces anomalus (Yeast), this protein is Beta-glucosidase.